The sequence spans 498 residues: NAD(P)H-quinone oxidoreductase chain 4, chloroplastic (498 aa).

14 helical membrane-spanning segments follow: residues 4 to 24, 31 to 51, 76 to 96, 113 to 130, 134 to 154, 167 to 187, 208 to 228, 242 to 262, 272 to 292, 305 to 325, 330 to 350, 386 to 406, 411 to 431, and 463 to 483; these read FPWL…IFLF, VIKW…SYVF, FYWS…TGFI, LFYF…GTFS, ILLF…LLSM, FILY…GMSF, ALEI…SPII, HYST…YGLV, AHSI…IYAA, IAYS…SISD, GAIL…FLAG, LALP…GIIT, LLIT…LTPI, and FISI…DFIF.

Belongs to the complex I subunit 4 family.

The protein localises to the plastid. Its subcellular location is the chloroplast thylakoid membrane. The catalysed reaction is a plastoquinone + NADH + (n+1) H(+)(in) = a plastoquinol + NAD(+) + n H(+)(out). The enzyme catalyses a plastoquinone + NADPH + (n+1) H(+)(in) = a plastoquinol + NADP(+) + n H(+)(out). The protein is NAD(P)H-quinone oxidoreductase chain 4, chloroplastic of Glycine max (Soybean).